A 577-amino-acid polypeptide reads, in one-letter code: Torulene dioxygenase (577 aa).

The tract at residues 1-20 is disordered; the sequence is MALNGPGVYHRTREHEQEDA. The Fe(2+) site is built by histidine 239, histidine 291, histidine 361, and histidine 570.

The protein belongs to the carotenoid oxygenase family. Fe(2+) serves as cofactor.

Its subcellular location is the cytoplasm. It localises to the cytosol. The enzyme catalyses torulene + O2 = 4'-apo-beta-carotenal + 3-methyl-2-butenal. Its pathway is carotenoid biosynthesis. Functionally, torulene dioxygenase; part of pathway that mediates the biosynthesis of neurosporaxanthin, a carboxylic apocarotenoid acting as an essential protective pigments and leading to orange pigmentation. CarT mediates the cleavage of torulene into beta-apo-4'-carotenal, the aldehyde corresponding to the acidic neurosporaxanthin. Is also active on other monocyclic synthetic substrates such as beta-apo-8'-carotenal and beta-apo-10'-carotenal to produce beta-apo-14'-carotenal and retinal(beta-apo-15'-carotenal), respectively. Neurosporaxanthin is synthesized from geranyl-geranyl pyrophosphate (GGPP) through several enzymatic activities. Phytoene synthase activity performed by the bifunctional enzyme carAR first produces phytoene from geranyl-geranyl pyrophosphate (GGPP). The phytoene dehydrogenase carB then introduces 4 desaturations to lead to lycopene which is substrate of the carotene cyclase activity of carAR that leads to the production of gamma-carotene. CarB then performs a 5th desaturation reaction to yield torulene. Torulene is the substrate of the dioxidase carT that breaks the molecule, removing five carbon atoms to yield beta-apo-4'-carotenal, whereas the aldehyde dehydrogenase carD mediates the last step by converting beta-apo-4'-carotenal into neurosporaxanthin. This is Torulene dioxygenase from Gibberella fujikuroi (strain CBS 195.34 / IMI 58289 / NRRL A-6831) (Bakanae and foot rot disease fungus).